The chain runs to 324 residues: Geranylgeranyl pyrophosphate synthase dpmpD (324 aa).

Positions 50, 53, and 82 each coordinate isopentenyl diphosphate. Mg(2+)-binding residues include Asp-89 and Asp-93. Arg-98 is a dimethylallyl diphosphate binding site. Residue Arg-99 participates in isopentenyl diphosphate binding. Residues Lys-176, Thr-177, and Gln-210 each coordinate dimethylallyl diphosphate. A Mg(2+)-binding site is contributed by Asp-213. Dimethylallyl diphosphate-binding residues include Asn-217, Lys-227, and Lys-237.

This sequence belongs to the FPP/GGPP synthase family. Mg(2+) is required as a cofactor.

It catalyses the reaction isopentenyl diphosphate + dimethylallyl diphosphate = (2E)-geranyl diphosphate + diphosphate. It carries out the reaction isopentenyl diphosphate + (2E)-geranyl diphosphate = (2E,6E)-farnesyl diphosphate + diphosphate. The enzyme catalyses isopentenyl diphosphate + (2E,6E)-farnesyl diphosphate = (2E,6E,10E)-geranylgeranyl diphosphate + diphosphate. It participates in secondary metabolite biosynthesis; terpenoid biosynthesis. In terms of biological role, geranylgeranyl pyrophosphate synthase; part of the gene cluster that mediates the biosynthesis of diterpenoid pyrones. The first step of the pathway is the synthesis of the alpha-pyrone moiety by the polyketide synthase dpmpA via condensation of one acetyl-CoA starter unit with 3 malonyl-CoA units and 2 methylations. The alpha-pyrone is then combined with geranylgeranyl pyrophosphate (GGPP) formed by the GGPP synthase dpmpD through the action of the prenyltransferase dpmpC to yield a linear alpha-pyrone diterpenoid. Subsequent steps in the diterpenoid pyrone biosynthetic pathway involve the decalin core formation, which is initiated by the epoxidation of the C10-C11 olefin by the FAD-dependent oxidoreductase dpmpE, and is followed by a cyclization cascade catalyzed by the terpene cyclase dpmpB. The short chain dehydrogenase/reductase dpmpG then oxidizes the 8S hydroxy group to a ketone and the short chain dehydrogenase/reductase dpmpH reduces the ketone to the 8R hydroxy group to yield higginsianin B. Higginsianin B is further methylated by the methyltransferase dpmpI to produce the intermediate named FDDP B. The cytochrome P450 monooxygenase dpmpJ then oxidizes the C-26 methyl to primary alcohol, producing the final diterpenoid pyrone with a C-26 primary alcohol on the gamma-pyrone moiety named FDDP C. In Macrophomina phaseolina (strain MS6) (Charcoal rot fungus), this protein is Geranylgeranyl pyrophosphate synthase dpmpD.